The primary structure comprises 828 residues: Cadherin-22 (828 aa).

The signal sequence occupies residues 1-34 (MRPRPEGRGLRAGVALSPALLLLLLLPPPPTLLG). The Extracellular portion of the chain corresponds to 36-624 (LWAAGTPSPS…AFVMAASLSP (589 aa)). 5 Cadherin domains span residues 64–168 (WVWN…EPRF), 169–277 (LHGP…PPRF), 278–394 (PQKM…PPEF), 395–498 (RPPS…NPPE), and 499–616 (LATP…TTAF). A glycan (N-linked (GlcNAc...) asparagine) is linked at Asn162. Asn466 and Asn612 each carry an N-linked (GlcNAc...) asparagine glycan. A helical membrane pass occupies residues 625-645 (GALIALLVCVLILVVLVLLIL). Residues 646–828 (TLRRHHKSHL…HRGDDEAQAS (183 aa)) lie on the Cytoplasmic side of the membrane. Positions 702-719 (GGGSAGGGAGGGSGGGAG) are enriched in gly residues. The tract at residues 702–745 (GGGSAGGGAGGGSGGGAGSPPQAHLPSERHSLPQGPPSPEPDFS) is disordered.

Its subcellular location is the cell membrane. Cadherins are calcium-dependent cell adhesion proteins. They preferentially interact with themselves in a homophilic manner in connecting cells; cadherins may thus contribute to the sorting of heterogeneous cell types. PB-cadherins may have a role in the morphological organization of pituitary gland and brain tissues. The protein is Cadherin-22 (CDH22) of Homo sapiens (Human).